The primary structure comprises 82 residues: Small ribosomal subunit protein uS17 (82 aa).

The protein belongs to the universal ribosomal protein uS17 family. As to quaternary structure, part of the 30S ribosomal subunit.

Its function is as follows. One of the primary rRNA binding proteins, it binds specifically to the 5'-end of 16S ribosomal RNA. In Afipia carboxidovorans (strain ATCC 49405 / DSM 1227 / KCTC 32145 / OM5) (Oligotropha carboxidovorans), this protein is Small ribosomal subunit protein uS17.